The chain runs to 35 residues: Photosystem II reaction center protein T (35 aa).

Residues A3–F23 form a helical membrane-spanning segment.

Belongs to the PsbT family. PSII is composed of 1 copy each of membrane proteins PsbA, PsbB, PsbC, PsbD, PsbE, PsbF, PsbH, PsbI, PsbJ, PsbK, PsbL, PsbM, PsbT, PsbY, PsbZ, Psb30/Ycf12, at least 3 peripheral proteins of the oxygen-evolving complex and a large number of cofactors. It forms dimeric complexes.

Its subcellular location is the plastid. It is found in the chloroplast thylakoid membrane. Functionally, found at the monomer-monomer interface of the photosystem II (PS II) dimer, plays a role in assembly and dimerization of PSII. PSII is a light-driven water plastoquinone oxidoreductase, using light energy to abstract electrons from H(2)O, generating a proton gradient subsequently used for ATP formation. The protein is Photosystem II reaction center protein T of Chaetosphaeridium globosum (Charophycean green alga).